A 491-amino-acid polypeptide reads, in one-letter code: MSSQIIPVEPFDYVVFGGTGDLAERKLLPALYHRQMEGQFTEPTRIIGASRASLSHDEYRRFASDALKEHLKSGEFNEAEVEKFTSRLYYVSVDAKSEQGWDDLKKLLEEGKDRTRAFYLAVGPAIFSDISEKIRDHKLITRNTRIVVEKPIGRDLASATELNDTIGKVFREEQIFRIDHYLGKETVQNLMALRFANALYEPLWNSAHIDHVQITVSEAVGLENRAGYYDKAGALRDMVQNHILQLLCFVAMEAPTSMDAEAVRDEKLKVLRALKPITASNVEQVTVRGQYRAGASSGGPVKGYLEELEGGVSNTETFVAIKAEISNWRWAGVPFYLRTGKRMAGRMSEIVITFKQIPHSIFDQSAGRISANQLMIRLQPNEGVKQSLMIKDPGPGGMRLRNVPLDMSFAEAFAVRNADAYERLLLDVIRNNQTLFVRRDEVEAAWQWIDPILKAWEATGQQVQGYTAGTWGPSQSIALIERDGRTWNDAI.

The NADP(+) site is built by Arg-51 and Lys-150. Substrate is bound by residues His-180, Lys-184, Glu-218, and Asp-237. The active-site Proton acceptor is His-242. Lys-341 is a substrate binding site.

This sequence belongs to the glucose-6-phosphate dehydrogenase family.

It carries out the reaction D-glucose 6-phosphate + NADP(+) = 6-phospho-D-glucono-1,5-lactone + NADPH + H(+). The protein operates within carbohydrate degradation; pentose phosphate pathway; D-ribulose 5-phosphate from D-glucose 6-phosphate (oxidative stage): step 1/3. In terms of biological role, catalyzes the oxidation of glucose 6-phosphate to 6-phosphogluconolactone. This Rhizobium meliloti (strain 1021) (Ensifer meliloti) protein is Glucose-6-phosphate 1-dehydrogenase.